A 704-amino-acid chain; its full sequence is Elongation factor G (704 aa).

The tr-type G domain occupies 8-290; the sequence is ARYRNIGISA…AVIDYLPAPT (283 aa). GTP is bound by residues 17–24, 88–92, and 142–145; these read AHIDAGKT, DTPGH, and NKMD.

Belongs to the TRAFAC class translation factor GTPase superfamily. Classic translation factor GTPase family. EF-G/EF-2 subfamily.

The protein resides in the cytoplasm. Functionally, catalyzes the GTP-dependent ribosomal translocation step during translation elongation. During this step, the ribosome changes from the pre-translocational (PRE) to the post-translocational (POST) state as the newly formed A-site-bound peptidyl-tRNA and P-site-bound deacylated tRNA move to the P and E sites, respectively. Catalyzes the coordinated movement of the two tRNA molecules, the mRNA and conformational changes in the ribosome. This is Elongation factor G from Pectobacterium atrosepticum (strain SCRI 1043 / ATCC BAA-672) (Erwinia carotovora subsp. atroseptica).